Here is a 336-residue protein sequence, read N- to C-terminus: 3-hydroxyisobutyrate dehydrogenase, mitochondrial (336 aa).

A mitochondrion-targeting transit peptide spans 1–36 (MAASLRLLGAASGLRYWSRRLRPAAGSFAAVCSRSV). 40–68 (TPVGFIGLGNMGNPMAKNLMKHGYPLIIY) is an NAD(+) binding site. Residues lysine 60 and lysine 76 each carry the N6-acetyllysine; alternate modification. 2 positions are modified to N6-succinyllysine; alternate: lysine 60 and lysine 76. The residue at position 95 (lysine 95) is an N6-succinyllysine. NAD(+)-binding positions include 103–104 (LP) and asparagine 108. Lysine 121 is subject to N6-acetyllysine. Position 134 (threonine 134) interacts with NAD(+). The residue at position 141 (lysine 141) is an N6-succinyllysine. Lysine 145 is subject to N6-acetyllysine. N6-acetyllysine; alternate is present on lysine 149. The residue at position 149 (lysine 149) is an N6-succinyllysine; alternate. Lysine 209 is an active-site residue. N6-acetyllysine; alternate is present on residues lysine 238 and lysine 242. Lysine 238 and lysine 242 each carry N6-succinyllysine; alternate. An NAD(+)-binding site is contributed by lysine 284. N6-succinyllysine is present on lysine 297. An N6-acetyllysine; alternate modification is found at lysine 321. Residue lysine 321 is modified to N6-succinyllysine; alternate.

This sequence belongs to the HIBADH-related family. 3-hydroxyisobutyrate dehydrogenase subfamily. In terms of assembly, homodimer. Detected in skin fibroblasts.

Its subcellular location is the mitochondrion. The enzyme catalyses 3-hydroxy-2-methylpropanoate + NAD(+) = 2-methyl-3-oxopropanoate + NADH + H(+). The protein operates within amino-acid degradation; L-valine degradation. In Homo sapiens (Human), this protein is 3-hydroxyisobutyrate dehydrogenase, mitochondrial (HIBADH).